The sequence spans 425 residues: MKTMDKRILLRALESEIERTTGCTDPGAVCLAVRAAAIELGVDPEKIVVTVSPNIYKNGINVGVPGTGMRGLHIAAGLGAVIKSTSSGLALLDAVDPADVERAVQLVNNGRVTITHAETTSALYIKAEVFSGAHYAHAVIRDDYTSIVEVGLDGKKVSSPRGMPVKTKHESLKGYTLEELFTSIDTMTVEELTFLRDAAEVNRKAAEAGLESGPCPLGKALYSGLAGAGVRHMAAARAQALTAAACEARMSGMQVPIIAIAGSGNHGIASFLGILAVAETLASPEEKLLKALAISSTVTVAIKEHSTKLSAFCGCAVAASTGVAAGTVYLLGGSYEEITHAMQSVIGTLAGMVCDGAKESCAFKLSSSVALAIQFGHLSLEDAYIKEGMGIVSQSIEKTFENLGRLNNPGMVTADKLMLQMISGH.

Belongs to the UPF0597 family.

The sequence is that of UPF0597 protein UNCMA_16400 from Methanocella arvoryzae (strain DSM 22066 / NBRC 105507 / MRE50).